Consider the following 104-residue polypeptide: Large ribosomal subunit protein uL24 (104 aa).

This sequence belongs to the universal ribosomal protein uL24 family. Part of the 50S ribosomal subunit.

Functionally, one of two assembly initiator proteins, it binds directly to the 5'-end of the 23S rRNA, where it nucleates assembly of the 50S subunit. Its function is as follows. One of the proteins that surrounds the polypeptide exit tunnel on the outside of the subunit. This is Large ribosomal subunit protein uL24 from Shewanella oneidensis (strain ATCC 700550 / JCM 31522 / CIP 106686 / LMG 19005 / NCIMB 14063 / MR-1).